The chain runs to 217 residues: Thiamine-phosphate synthase (217 aa).

4-amino-2-methyl-5-(diphosphooxymethyl)pyrimidine contacts are provided by residues 39 to 43 and asparagine 71; that span reads QYRDK. Mg(2+) is bound by residues aspartate 72 and aspartate 91. Threonine 110 is a 4-amino-2-methyl-5-(diphosphooxymethyl)pyrimidine binding site. 137–139 contacts 2-[(2R,5Z)-2-carboxy-4-methylthiazol-5(2H)-ylidene]ethyl phosphate; the sequence is SNT. Lysine 140 serves as a coordination point for 4-amino-2-methyl-5-(diphosphooxymethyl)pyrimidine. Glycine 167 provides a ligand contact to 2-[(2R,5Z)-2-carboxy-4-methylthiazol-5(2H)-ylidene]ethyl phosphate.

It belongs to the thiamine-phosphate synthase family. It depends on Mg(2+) as a cofactor.

The enzyme catalyses 2-[(2R,5Z)-2-carboxy-4-methylthiazol-5(2H)-ylidene]ethyl phosphate + 4-amino-2-methyl-5-(diphosphooxymethyl)pyrimidine + 2 H(+) = thiamine phosphate + CO2 + diphosphate. It carries out the reaction 2-(2-carboxy-4-methylthiazol-5-yl)ethyl phosphate + 4-amino-2-methyl-5-(diphosphooxymethyl)pyrimidine + 2 H(+) = thiamine phosphate + CO2 + diphosphate. It catalyses the reaction 4-methyl-5-(2-phosphooxyethyl)-thiazole + 4-amino-2-methyl-5-(diphosphooxymethyl)pyrimidine + H(+) = thiamine phosphate + diphosphate. The protein operates within cofactor biosynthesis; thiamine diphosphate biosynthesis; thiamine phosphate from 4-amino-2-methyl-5-diphosphomethylpyrimidine and 4-methyl-5-(2-phosphoethyl)-thiazole: step 1/1. Functionally, condenses 4-methyl-5-(beta-hydroxyethyl)thiazole monophosphate (THZ-P) and 2-methyl-4-amino-5-hydroxymethyl pyrimidine pyrophosphate (HMP-PP) to form thiamine monophosphate (TMP). This chain is Thiamine-phosphate synthase, found in Saccharophagus degradans (strain 2-40 / ATCC 43961 / DSM 17024).